The chain runs to 647 residues: 1-deoxy-D-xylulose-5-phosphate synthase (647 aa).

Residues His79 and Gly120–Ala122 each bind thiamine diphosphate. Asp152 serves as a coordination point for Mg(2+). Thiamine diphosphate-binding positions include Gly153 to Ser154, Asn181, Phe293, and Glu377. Mg(2+) is bound at residue Asn181.

The protein belongs to the transketolase family. DXPS subfamily. Homodimer. It depends on Mg(2+) as a cofactor. Thiamine diphosphate serves as cofactor.

The catalysed reaction is D-glyceraldehyde 3-phosphate + pyruvate + H(+) = 1-deoxy-D-xylulose 5-phosphate + CO2. It participates in metabolic intermediate biosynthesis; 1-deoxy-D-xylulose 5-phosphate biosynthesis; 1-deoxy-D-xylulose 5-phosphate from D-glyceraldehyde 3-phosphate and pyruvate: step 1/1. Functionally, catalyzes the acyloin condensation reaction between C atoms 2 and 3 of pyruvate and glyceraldehyde 3-phosphate to yield 1-deoxy-D-xylulose-5-phosphate (DXP). This chain is 1-deoxy-D-xylulose-5-phosphate synthase, found in Bacteroides thetaiotaomicron (strain ATCC 29148 / DSM 2079 / JCM 5827 / CCUG 10774 / NCTC 10582 / VPI-5482 / E50).